We begin with the raw amino-acid sequence, 270 residues long: High choriolytic enzyme 1 (270 aa).

An N-terminal signal peptide occupies residues 1 to 20; the sequence is MNLAPSTCLLLLFLLDIAQA. The propeptide at 21-70 is activation peptide; sequence LPVWDEEGHEEGHEEGDGDDFVDITTRILTSNNNTDQLLLEGDLVAPTNR. N-linked (GlcNAc...) asparagine glycosylation is present at N53. Residues 71–270 enclose the Peptidase M12A domain; that stretch reads NAMKCWSSSC…TRINVLYNCR (200 aa). 3 disulfide bridges follow: C75–C80, C120–C269, and C141–C161. Position 169 (H169) interacts with Zn(2+). E170 is a catalytic residue. Residues H173 and H179 each coordinate Zn(2+).

Requires Zn(2+) as cofactor.

It is found in the zymogen granule. It carries out the reaction Hydrolysis of the inner layer of fish egg envelope. Also hydrolysis of casein and small molecule substrates such as succinyl-Leu-Leu-Val-Tyr-|-7-(4-methyl)coumarylamide.. Functionally, participates in the breakdown of the egg envelope, which is derived from the egg extracellular matrix, at the time of hatching. Thus allowing the newly hatched fish to swim free. HCE binds tightly to the egg envelope while it exerts the choriolytic swelling action. The polypeptide is High choriolytic enzyme 1 (hcea) (Oryzias latipes (Japanese rice fish)).